The sequence spans 2624 residues: Highly reducing polyketide synthase ALT1 (2624 aa).

Positions 28–449 constitute a Ketosynthase family 3 (KS3) domain; it reads VLPLAIVGMG…GSNAHCILES (422 aa). Catalysis depends on Cys200, which acts as the For beta-ketoacyl synthase activity. The segment at 289–308 is disordered; it reads VRGTSSNSDGKTPGMSMPSS. Catalysis depends on for beta-ketoacyl synthase activity residues His335 and His372. Polar residues predominate over residues 523-544; that stretch reads ESYSNHHTLTETTNPSNNTATN. The disordered stretch occupies residues 523–545; it reads ESYSNHHTLTETTNPSNNTATNG. The tract at residues 639 to 945 is malonyl-CoA:ACP transacylase (MAT) domain; sequence VFTGQGAQWA…GYTPAMIRGK (307 aa). An N-terminal hotdog fold region spans residues 1009 to 1140; it reads HELLGSQTLE…GQVRPGRDAH (132 aa). The tract at residues 1009 to 1301 is dehydratase (DH) domain; the sequence is HELLGSQTLE…LEGGKFSPIE (293 aa). One can recognise a PKS/mFAS DH domain in the interval 1009–1306; it reads HELLGSQTLE…FSPIEVDDGI (298 aa). His1041 acts as the Proton acceptor; for dehydratase activity in catalysis. Residues 1157 to 1306 form a C-terminal hotdog fold region; the sequence is QYPRPVDSLY…FSPIEVDDGI (150 aa). The Proton donor; for dehydratase activity role is filled by Asp1217. Residues 1493–1599 are methyltransferase (CMet) domain; the sequence is LEIGAGTGGA…RKLLAPEGYL (107 aa). The enoyl reductase (ER) (ER) domain stretch occupies residues 1895 to 2205; sequence GLLQTLKWVD…KGTHLGKIVV (311 aa). The tract at residues 2230–2509 is ketoreductase (KR) domain; that stretch reads TYVLVGGLGG…DSDALRFFIT (280 aa). Positions 2522–2600 constitute a Carrier domain; it reads ASLDLVTRTI…GLAKLILDAL (79 aa). Ser2559 is modified (O-(pantetheine 4'-phosphoryl)serine).

It participates in mycotoxin biosynthesis. Functionally, highly reducing polyketide synthase; part of the gene cluster that mediates the biosynthesis of the host-selective toxins (HSTs) AAL-toxins, sphinganine-analog mycotoxins responsible for Alternaria stem canker on tomato by the tomato pathotype. The biosynthesis starts with the polyketide synthase ALT1-catalyzed C-16 carbon chain assembly from one starter acetyl-CoA unit with malonyl-CoA extender units. ALT1 also selectively transfers methyl groups at the first and the third cycle of chain elongation for AAL toxin. The C-16 polyketide chain is released from the enzyme by a nucleophilic attack of a carbanion, which is derived from R-carbon of glycin by decarboxylation, on the carbonyl carbon of polyketide acyl chain. This step is probably catalyzed by a pyridoxal 5'-phosphate-dependent aminoacyl transferase ALT4. The respective functions of the other enzymes encoded by the cluster have still to be elucidated. The sphingosine N-acyltransferase-like protein ALT7 seems not to act as a resistance/self-tolerance factor against the toxin in the toxin biosynthetic gene cluster, contrary to what is expected. The sequence is that of Highly reducing polyketide synthase ALT1 from Alternaria alternata (Alternaria rot fungus).